The sequence spans 216 residues: Adenylate kinase (216 aa).

Residue 10–15 coordinates ATP; that stretch reads GAGKGT. The interval 30 to 59 is NMP; it reads STGDIFRANIKEKTPLGIEAKRYIDNGQLV. Residues T31, R36, 57-59, 85-88, and Q92 contribute to the AMP site; these read QLV and GFPR. Positions 126-163 are LID; it reads GRRVCTSCGASYHIRFNPPKIEGKCDICDNELIQRKDD. Position 127 (R127) interacts with ATP. 2 residues coordinate Zn(2+): C130 and C133. 136-137 contributes to the ATP binding site; it reads SY. Zn(2+) contacts are provided by C150 and C153. AMP is bound by residues R160 and R171. E199 is a binding site for ATP.

This sequence belongs to the adenylate kinase family. Monomer.

It localises to the cytoplasm. The enzyme catalyses AMP + ATP = 2 ADP. Its pathway is purine metabolism; AMP biosynthesis via salvage pathway; AMP from ADP: step 1/1. Catalyzes the reversible transfer of the terminal phosphate group between ATP and AMP. Plays an important role in cellular energy homeostasis and in adenine nucleotide metabolism. This Clostridium botulinum (strain 657 / Type Ba4) protein is Adenylate kinase.